The sequence spans 155 residues: MTQDNSPAKPKAPPKSARRRARELALQGLYQWLLNRNDPGVVEAHLHDAQGFNKADRAHFDALLHGAIREEATLTESFTPFLDRPVAELSPVERAALLVGAYELVHCVDIPYKVVINEAVELAKTFGGVEGYKYVNGVLDKLAAQVRAVEVAARR.

This sequence belongs to the NusB family.

Its function is as follows. Involved in transcription antitermination. Required for transcription of ribosomal RNA (rRNA) genes. Binds specifically to the boxA antiterminator sequence of the ribosomal RNA (rrn) operons. This is Transcription antitermination protein NusB from Ralstonia nicotianae (strain ATCC BAA-1114 / GMI1000) (Ralstonia solanacearum).